Consider the following 217-residue polypeptide: Claudin-9 (217 aa).

Residues 1–7 (MASTGLE) lie on the Cytoplasmic side of the membrane. Residues 8–28 (LLGMTLAVLGWLGTLVSCALP) traverse the membrane as a helical segment. At 29–81 (LWKVTAFIGNSIVVAQVVWEGLWMSCVVQSTGQMQCKVYDSLLALPQDLQAAR) the chain is on the extracellular side. A helical membrane pass occupies residues 82–102 (ALCVIALLLALLGLLVAITGA). Residues 103 to 116 (QCTTCVEDEGAKAR) are Cytoplasmic-facing. The helical transmembrane segment at 117 to 137 (IVLTAGVILLLAGILVLIPVC) threads the bilayer. The Extracellular segment spans residues 138–159 (WTAHAIIQDFYNPLVAEALKRE). Residues 160-180 (LGASLYLGWAAAALLMLGGGL) form a helical membrane-spanning segment. Residues 181 to 217 (LCCTCPPPQVERPRGPRLGYSIPSRSGASGLDKRDYV) lie on the Cytoplasmic side of the membrane. The interval 194 to 217 (RGPRLGYSIPSRSGASGLDKRDYV) is disordered.

It belongs to the claudin family. In terms of assembly, interacts with CLDN1, CD81 and OCLN. As to expression, expressed in the liver, in peripheral blood mononuclear cells and hepatocarcinoma cell lines.

The protein localises to the cell junction. The protein resides in the tight junction. It is found in the cell membrane. Plays a major role in tight junction-specific obliteration of the intercellular space, through calcium-independent cell-adhesion activity. Functionally, (Microbial infection) Acts as a receptor for hepatitis C virus (HCV) entry into hepatic cells. This Homo sapiens (Human) protein is Claudin-9 (CLDN9).